Consider the following 151-residue polypeptide: Cytochrome c oxidase subunit 5B, mitochondrial (151 aa).

Residues 1-17 constitute a mitochondrion transit peptide; it reads MLRTSLTKGARLTGTRF. Topologically, residues 18-85 are mitochondrial matrix; that stretch reads VQTKALSKAT…EWGPRRPVHG (68 aa). Residues 86 to 108 traverse the membrane as a helical segment; that stretch reads KGDVAFITKGVFLGLGISFGLFG. At 109–151 the chain is on the mitochondrial intermembrane side; the sequence is LVRLLANPETPKTMNREWQLKSDEYLKSKNANPWGGYSQVQSK.

The protein belongs to the cytochrome c oxidase IV family. In terms of assembly, component of the cytochrome c oxidase (complex IV, CIV), a multisubunit enzyme composed of 12 subunits. The complex is composed of a catalytic core of 3 subunits COX1, COX2 and COX3, encoded in the mitochondrial DNA, and 9 supernumerary subunits COX4, COX5A (or COX5B), COX6, COX7, COX8, COX9, COX12, COX13 and COX26, which are encoded in the nuclear genome. COX5A is the predominant subunit V during aerobic/normoxic growth, it gets replaced by COX5B under anaerobic/hypoxic conditions. The complex exists as a monomer or a dimer and forms supercomplexes (SCs) in the inner mitochondrial membrane with a dimer of ubiquinol-cytochrome c oxidoreductase (cytochrome b-c1 complex, complex III, CIII), resulting in 2 different assemblies (supercomplexes III(2)IV and III(2)IV(2)).

It localises to the mitochondrion inner membrane. It participates in energy metabolism; oxidative phosphorylation. Component of the cytochrome c oxidase, the last enzyme in the mitochondrial electron transport chain which drives oxidative phosphorylation. The respiratory chain contains 3 multisubunit complexes succinate dehydrogenase (complex II, CII), ubiquinol-cytochrome c oxidoreductase (cytochrome b-c1 complex, complex III, CIII) and cytochrome c oxidase (complex IV, CIV), that cooperate to transfer electrons derived from NADH and succinate to molecular oxygen, creating an electrochemical gradient over the inner membrane that drives transmembrane transport and the ATP synthase. Cytochrome c oxidase is the component of the respiratory chain that catalyzes the reduction of oxygen to water. Electrons originating from reduced cytochrome c in the intermembrane space (IMS) are transferred via the dinuclear copper A center (CU(A)) of COX2 and heme A of COX1 to the active site in COX1, a binuclear center (BNC) formed by heme A3 and copper B (CU(B)). The BNC reduces molecular oxygen to 2 water molecules using 4 electrons from cytochrome c in the IMS and 4 protons from the mitochondrial matrix. This chain is Cytochrome c oxidase subunit 5B, mitochondrial (COX5B), found in Saccharomyces cerevisiae (strain ATCC 204508 / S288c) (Baker's yeast).